A 986-amino-acid polypeptide reads, in one-letter code: Bifunctional glutamine synthetase adenylyltransferase/adenylyl-removing enzyme (986 aa).

Positions 1–470 (MAAVAKRTVT…ERHYAALFET (470 aa)) are adenylyl removase. The interval 476-986 (AGIGNLVFTG…FDLLLRAGRP (511 aa)) is adenylyl transferase.

Belongs to the GlnE family. Requires Mg(2+) as cofactor.

It carries out the reaction [glutamine synthetase]-O(4)-(5'-adenylyl)-L-tyrosine + phosphate = [glutamine synthetase]-L-tyrosine + ADP. The catalysed reaction is [glutamine synthetase]-L-tyrosine + ATP = [glutamine synthetase]-O(4)-(5'-adenylyl)-L-tyrosine + diphosphate. Involved in the regulation of glutamine synthetase GlnA, a key enzyme in the process to assimilate ammonia. When cellular nitrogen levels are high, the C-terminal adenylyl transferase (AT) inactivates GlnA by covalent transfer of an adenylyl group from ATP to specific tyrosine residue of GlnA, thus reducing its activity. Conversely, when nitrogen levels are low, the N-terminal adenylyl removase (AR) activates GlnA by removing the adenylyl group by phosphorolysis, increasing its activity. The regulatory region of GlnE binds the signal transduction protein PII (GlnB) which indicates the nitrogen status of the cell. The polypeptide is Bifunctional glutamine synthetase adenylyltransferase/adenylyl-removing enzyme (Mesorhizobium japonicum (strain LMG 29417 / CECT 9101 / MAFF 303099) (Mesorhizobium loti (strain MAFF 303099))).